Consider the following 1284-residue polypeptide: MSKLLNNNNHKNLTNYLKFGKGIINNLNNKSKQVGIISFISQSSIQSQSSIQSQSFLSINNNSNNKYFSTKLNKNEKISEKTTTRKIEDIYQKKTPTEHVLLRPDSYIGTIEKIEDDMWVLSNSMFNKEKKTIELNNDNNEKNVESTTTTTTKTNKKPLTYIHPIKATYIPGLLKIYDEILVNAADNKKRDSKMSFIKVEINPNENSISIMNDGKGIPVVMHQTENCYVVEMVMGNLMSGSNFNDSELKVVGGRNGFGAKLTNIFSKEFTVETVDKSSGKKYFQRWSNNMGDRSEPIITPIGEGESDYTKITFKPDLEKFKIKSLWDDNILQLMERRLYDIAGCNTELMVTLNGKRLNYNFQSYVKLYEHHLNNSTKREDNEEQYREESFEFGEISPRWKIGIGLSETGQFTQVSFVNSINTVKGGTHVNFLADQIVRYVGEKLKKKHSDLEIRPMNIKHHLALFVNCLVDNPSFDSQSKETLTTKPMLFGSTPEIPESLLAQFVKNSKIIERVAGWALMKQKADLIHSTSGRQSKTTLIKSISKLDDANWAGGLKSKECTLIITEGDSAKSLALAGLSVVGRNSYGVFPLRGKLLNVRDVASKQLLSNEEINNLTTILGLSHKNSYDTDESMEDLRYGRVMIMADQDHDGSHIKGLVMNFIHYFWPNLLKRGFLVEFVTPIIKATKSSTQKKSFFTIKDYEKWRETISSDQLKQYTIKYYKGLGTSTSAEAKEYFSNLDKHVIKFIWGDEADDLIKMAFAKDLSSLRQRWIKETDMSQGIDHSIKEITYPDFINKELIHYSWAANLRSIPSLIDGLKPGQRKILFASFKRRLTNEIKVSQLSGYVAEQTSYHHGEQSLNSTIVKMAHNFVGSNNLPLLTPSGQFGTRLQGGSDSASARYIFTKLEPVARYLFNELDDPLLNYLEEEGESIQPDYYIPIIPMLLVNGSEGIGVGMSTSIPLFSPIDIIDQLMLRLNNQVALKKLIPWYRGFKGTISPDRHTYRTNGVIKLVGRNLEITELPIGRWTSDYKEVLNDLIDKDVIKSFQESNTENSVHFTILLNNNQLEQMEDLTENELIKLFKLSASLNFHLTCFDENSKIQKLESVEEIIDQFYKVRLQFYGKRREYLLKSLDNQIKRLTTTIQFLEVIASGKLKIQGRSKQDLIKELESGEIVGFENFGTHPPEVYQHLFSLSILDITKERIDNLTNQLTKRKSEHQSISSSDPKSLWTADLQQLKEYLEKSDKEFQKKPLKTSSSSSFDVSSSSESAKLSSTRKSKTDKIKSK.

Residues 1–35 (MSKLLNNNNHKNLTNYLKFGKGIINNLNNKSKQVG) constitute a mitochondrion transit peptide. ATP contacts are provided by residues asparagine 183, asparagine 212, 240–242 (GSN), and 253–260 (GRNGFGAK). Positions 445–447 (KKK) are interaction with DNA. An ATP-binding site is contributed by 478–480 (QSK). The Toprim domain occupies 560 to 677 (CTLIITEGDS…NLLKRGFLVE (118 aa)). Mg(2+)-binding residues include glutamate 566, aspartate 646, and aspartate 648. The 423-residue stretch at 810–1232 (IPSLIDGLKP…DPKSLWTADL (423 aa)) folds into the Topo IIA-type catalytic domain. The active-site O-(5'-phospho-DNA)-tyrosine intermediate is the tyrosine 900. The segment at 1245–1284 (EFQKKPLKTSSSSSFDVSSSSESAKLSSTRKSKTDKIKSK) is disordered. Positions 1254-1271 (SSSSSFDVSSSSESAKLS) are enriched in low complexity.

It belongs to the type II topoisomerase family. Homodimer. Mg(2+) serves as cofactor. Mn(2+) is required as a cofactor. Requires Ca(2+) as cofactor.

The protein localises to the mitochondrion. The enzyme catalyses ATP-dependent breakage, passage and rejoining of double-stranded DNA.. Control of topological states of DNA by transient breakage and subsequent rejoining of DNA strands. Topoisomerase II makes double-strand breaks. In Dictyostelium discoideum (Social amoeba), this protein is DNA topoisomerase 2, mitochondrial (top2mt).